A 401-amino-acid polypeptide reads, in one-letter code: All trans-polyprenyl-diphosphate synthase PDSS2 (401 aa).

It belongs to the FPP/GGPP synthase family. Heterotetramer composed of 2 PDSS1/DPS1 and 2 PDSS2/DLP1 subunits.

The protein resides in the mitochondrion. The catalysed reaction is 7 isopentenyl diphosphate + (2E,6E)-farnesyl diphosphate = all-trans-decaprenyl diphosphate + 7 diphosphate. The enzyme catalyses 6 isopentenyl diphosphate + (2E,6E)-farnesyl diphosphate = all-trans-nonaprenyl diphosphate + 6 diphosphate. It participates in cofactor biosynthesis; ubiquinone biosynthesis. Functionally, heterotetrameric enzyme that catalyzes the condensation of farnesyl diphosphate (FPP), which acts as a primer, and isopentenyl diphosphate (IPP) to produce prenyl diphosphates of varying chain lengths and participates in the determination of the side chain of ubiquinone. Supplies nona and decaprenyl diphosphate, the precursors for the side chain of the isoprenoid quinones ubiquinone-9 (Q9) and ubiquinone-10 (Q10) respectively. The enzyme adds isopentenyl diphosphate molecules sequentially to farnesyl diphosphate with trans stereochemistry. May play a role during cerebellar development. May regulate mitochondrial respiratory chain function. The polypeptide is All trans-polyprenyl-diphosphate synthase PDSS2 (Rattus norvegicus (Rat)).